The primary structure comprises 436 residues: Citrate synthase (436 aa).

Residues His313 and Asp371 contribute to the active site.

The protein belongs to the citrate synthase family. In terms of assembly, homohexamer.

It catalyses the reaction oxaloacetate + acetyl-CoA + H2O = citrate + CoA + H(+). The protein operates within carbohydrate metabolism; tricarboxylic acid cycle; isocitrate from oxaloacetate: step 1/2. This Acetobacter aceti protein is Citrate synthase (aarA).